Consider the following 478-residue polypeptide: Septin-4 (478 aa).

Residues 38–115 (VKDFSGNESC…RSPWGKLDPY (78 aa)) are disordered. Low complexity predominate over residues 95-108 (APAPLSPSARPRSP). Ser-117 and Ser-118 each carry phosphoserine. The 274-residue stretch at 141-414 (KGFDFTLMVA…ENYRAQCIQS (274 aa)) folds into the Septin-type G domain. Residues 151–158 (GESGLGKS) form a G1 motif region. GTP-binding positions include 151–158 (GESGLGKS) and Thr-185. Residues 208 to 211 (DTPG) form a G3 motif region. The interval 289 to 292 (AKAD) is G4 motif. 290–298 (KADTLTPPE) lines the GTP pocket. Phosphoserine is present on Ser-325. The GTP site is built by Gly-348 and Arg-363. Residues 425–448 (RNKLTRESGTDLPIPAVPPGTDPE) are disordered. Ser-432 is modified (phosphoserine). Thr-434 carries the phosphothreonine modification. Residues 446 to 478 (DPETEKLIREKDEELRRMQEMLHKIQKQMKETY) adopt a coiled-coil conformation.

This sequence belongs to the TRAFAC class TrmE-Era-EngA-EngB-Septin-like GTPase superfamily. Septin GTPase family. Septins polymerize into heterooligomeric protein complexes that form filaments, and can associate with cellular membranes, actin filaments and microtubules. GTPase activity is required for filament formation. Interacts with SEPTIN8. Component of a septin core octameric complex consisting of SEPTIN12, SEPTIN7, SEPTIN6 and SEPTIN2 or SEPTIN4 in the order 12-7-6-2-2-6-7-12 or 12-7-6-4-4-6-7-12. Interacts with SEPTIN14 (via C-terminus). Interacts with DYRK1A. Interacts with SLC6A3/DAT and SNCA/alpha-synuclein. Interacts with STX1A; in the striatum. Interacts with XIAP (via BIR3 domain) following the induction of apoptosis. Interacts with AREL1 (via HECT domain); in the cytoplasm following induction of apoptosis. In terms of processing, ubiquitinated by AREL1. Post-translationally, phosphorylated by DYRK1A.

The protein resides in the cytoplasm. It is found in the cell projection. It localises to the cilium. Its subcellular location is the flagellum. The protein localises to the cytoplasmic vesicle. The protein resides in the secretory vesicle. It is found in the axon. It localises to the dendrite. Its subcellular location is the perikaryon. The protein localises to the synapse. Filament-forming cytoskeletal GTPase. Pro-apoptotic protein involved in LGR5-positive intestinal stem cell and Paneth cell expansion in the intestines, via its interaction with XIAP. May also play a role in the regulation of cell fate in the intestine. Positive regulator of apoptosis involved in hematopoietic stem cell homeostasis; via its interaction with XIAP. Negative regulator of repair and hair follicle regeneration in response to injury, due to inhibition of hair follicle stem cell proliferation, potentially via its interaction with XIAP. Plays an important role in male fertility and sperm motility. During spermiogenesis, essential for the establishment of the annulus (a fibrous ring structure connecting the midpiece and the principal piece of the sperm flagellum) which is a requisite for the structural and mechanical integrity of the sperm. Involved in the migration of cortical neurons and the formation of neuron leading processes during embryonic development. Required for dopaminergic metabolism in presynaptic autoreceptors; potentially via activity as a presynaptic scaffold protein. The chain is Septin-4 from Pongo abelii (Sumatran orangutan).